We begin with the raw amino-acid sequence, 182 residues long: MTDVRGELLQQIKDKAVVHGKVTLSSGLEADYYVDLRRITLDGEAAPLVGQVLLDLTADLEFDAVGGLTMGADPVAASMLHAAAARGRRLDAFVVRKTAKAHGLQRRVEGPEIKGRRVVVVEDTSTTGGSPLTAVEAVREAGAEVVAVATIVDRATGAGEKIQDGAGVPYLYAYGKDELGLD.

Residues Arg96, Lys97, Lys100, His102, and 122–130 (EDTSTTGGS) each bind 5-phospho-alpha-D-ribose 1-diphosphate. Thr126 and Arg154 together coordinate orotate.

Belongs to the purine/pyrimidine phosphoribosyltransferase family. PyrE subfamily. In terms of assembly, homodimer. Mg(2+) serves as cofactor.

It catalyses the reaction orotidine 5'-phosphate + diphosphate = orotate + 5-phospho-alpha-D-ribose 1-diphosphate. It functions in the pathway pyrimidine metabolism; UMP biosynthesis via de novo pathway; UMP from orotate: step 1/2. Functionally, catalyzes the transfer of a ribosyl phosphate group from 5-phosphoribose 1-diphosphate to orotate, leading to the formation of orotidine monophosphate (OMP). The sequence is that of Orotate phosphoribosyltransferase from Streptomyces coelicolor (strain ATCC BAA-471 / A3(2) / M145).